Reading from the N-terminus, the 141-residue chain is ATP synthase epsilon chain (141 aa).

The protein belongs to the ATPase epsilon chain family. F-type ATPases have 2 components, CF(1) - the catalytic core - and CF(0) - the membrane proton channel. CF(1) has five subunits: alpha(3), beta(3), gamma(1), delta(1), epsilon(1). CF(0) has three main subunits: a, b and c.

It is found in the cell inner membrane. Its function is as follows. Produces ATP from ADP in the presence of a proton gradient across the membrane. This is ATP synthase epsilon chain from Burkholderia cenocepacia (strain ATCC BAA-245 / DSM 16553 / LMG 16656 / NCTC 13227 / J2315 / CF5610) (Burkholderia cepacia (strain J2315)).